The chain runs to 628 residues: Carbon monoxide dehydrogenase 1 (628 aa).

[4Fe-4S] cluster contacts are provided by C44, C52, C53, C56, C61, and C75. [Ni-4Fe-5S] cluster is bound by residues H266, C302, C340, C448, C478, and C519.

It belongs to the Ni-containing carbon monoxide dehydrogenase family. Homodimer. Requires [4Fe-4S] cluster as cofactor. [Ni-4Fe-5S] cluster is required as a cofactor.

The catalysed reaction is CO + 2 oxidized [2Fe-2S]-[ferredoxin] + H2O = 2 reduced [2Fe-2S]-[ferredoxin] + CO2 + 2 H(+). CODH oxidizes carbon monoxide coupled, via CooF, to the reduction of a hydrogen cation by a hydrogenase (possibly CooH). The sequence is that of Carbon monoxide dehydrogenase 1 (cooS1) from Methanosarcina acetivorans (strain ATCC 35395 / DSM 2834 / JCM 12185 / C2A).